Consider the following 905-residue polypeptide: DNA mismatch repair protein MutS (905 aa).

Positions 388–410 (LERPANPEGTYPTDAETSGDTLP) are disordered. 638–645 (GPNMAGKS) lines the ATP pocket. The segment at 826–847 (RDAARGTNSAPSRQTLPGLDLP) is disordered. The segment covering 831 to 840 (GTNSAPSRQT) has biased composition (polar residues).

This sequence belongs to the DNA mismatch repair MutS family.

In terms of biological role, this protein is involved in the repair of mismatches in DNA. It is possible that it carries out the mismatch recognition step. This protein has a weak ATPase activity. This Nitratidesulfovibrio vulgaris (strain DP4) (Desulfovibrio vulgaris) protein is DNA mismatch repair protein MutS.